Consider the following 1072-residue polypeptide: DNA-directed RNA polymerase subunit beta (1072 aa).

The protein belongs to the RNA polymerase beta chain family. In plastids the minimal PEP RNA polymerase catalytic core is composed of four subunits: alpha, beta, beta', and beta''. When a (nuclear-encoded) sigma factor is associated with the core the holoenzyme is formed, which can initiate transcription.

The protein localises to the plastid. The protein resides in the chloroplast. The catalysed reaction is RNA(n) + a ribonucleoside 5'-triphosphate = RNA(n+1) + diphosphate. DNA-dependent RNA polymerase catalyzes the transcription of DNA into RNA using the four ribonucleoside triphosphates as substrates. This Nasturtium officinale (Watercress) protein is DNA-directed RNA polymerase subunit beta.